The following is a 264-amino-acid chain: GTP cyclohydrolase FolE2 (264 aa).

It belongs to the GTP cyclohydrolase IV family.

The enzyme catalyses GTP + H2O = 7,8-dihydroneopterin 3'-triphosphate + formate + H(+). It participates in cofactor biosynthesis; 7,8-dihydroneopterin triphosphate biosynthesis; 7,8-dihydroneopterin triphosphate from GTP: step 1/1. Converts GTP to 7,8-dihydroneopterin triphosphate. This Vesicomyosocius okutanii subsp. Calyptogena okutanii (strain HA) protein is GTP cyclohydrolase FolE2.